We begin with the raw amino-acid sequence, 309 residues long: Short-chain dehydrogenase/reductase ARMGADRAFT_1018437 (309 aa).

The NADP(+) site is built by Lys64, Asp86, and Asn113. The active-site Proton donor is the Ser167. Tyr196 and Lys200 together coordinate NADP(+). Tyr196 serves as the catalytic Proton acceptor. The Lowers pKa of active site Tyr role is filled by Lys200.

It belongs to the short-chain dehydrogenases/reductases (SDR) family.

Its pathway is secondary metabolite biosynthesis. Its function is as follows. Short-chain dehydrogenase/reductase, part of the gene cluster that mediates the biosynthesis of melleolides, a range of antifungal and phytotoxic polyketide derivatives composed of an orsellinic acid (OA) moiety esterified to various sesquiterpene alcohols. The first step in melleolides biosynthesis is performed by the delta(6)-protoilludene synthase PRO1 which catalyzes the cyclization of farnesyl diphosphate to protoilludene. The orsellinic acid synthase armB produces OA by condensing acetyl-CoA with 3 malonyl-CoA units in a three-round chain elongation reaction folowed by a C2-C7 ring closure. ArmB further catalyzes the trans-esterification of OA to the various sesquiterpene alcohols resulting from the hydroxylation of protoilludene. The melleolides cluster also includes 5 cytochrome P450 monooxygenases, 4 NAD(+)-dependent oxidoreductases, one flavin-dependent oxidoreductase, and one O-methyltransferase. The cytochrome P450 monooxygenases may be involved in protoilludene hydroxylation to elaborate melleolides with multiple alcohol groups, such as melleolide D, which carries alcohol functionalities at C-4, C-5, C-10, and C-13. The role of the NAD(+)-dependent enzymes remains unknown. Numerous melleolides, including arnamial, show 5'-O-methylation of the aromatic moiety which may be catalyzed by the methyltransferase encoded in the cluster. The flavin-dependent oxidoreductase might represent the dehydrogenase yielding the aldehyde in position 1 of arnamial and other melleolides. Finally, several halogenase localized outside of the cluster, are able to catalyze the transfer of a single chlorine atom to the melleolide backbone, resulting in a 6'-chloromelleolide product. This chain is Short-chain dehydrogenase/reductase ARMGADRAFT_1018437, found in Armillaria gallica (Bulbous honey fungus).